Reading from the N-terminus, the 281-residue chain is UPF0162 protein XF_1494 (281 aa).

TPR repeat units follow at residues 193-226 (VRILRNLHSVYANTNRWDRAARCADRILKLVPNQ) and 227-260 (PEALRDRGLAYLQLGHRSGARNDLTRYLQLYPST).

It belongs to the UPF0162 family.

The protein is UPF0162 protein XF_1494 of Xylella fastidiosa (strain 9a5c).